The sequence spans 431 residues: MLDINFIRQNPEKVSRMLEQRQQREDIAKLNQLLDFDVRRRTMVQRTDELKALRNKVSKDIAVIKRSGQGSADDLIVQMKAVADEISGMDDTLKSLEAQIEELLLSLPNKLHEDVPEGRCADDNHIYREKLSFDHKLDFPLDNHLDLGKRLGILDFERGAKITGAGFPVYTAKGARLERALINFMLDQHTSVNGYTEVLPPLFVNRESLRGTGQWPKFADQVYYMNEDNLYAIPTAEVPLTNMHRDEILDASDIPLAYAAYTPCFRREAGSYGKDTRGFLRVHQFNKVELVRYATPTTSYDALQEILSHAEGILQALKIPYRVLLLCSGDISANATKCYDIEVWAPGEGKFLEASSCSNFEDYQARRANIRYRPEDGGKPTYVHTLNGSGLATSRLMVALLENYQTPEGSIRIPDVLQPYTGFSSIDQAAE.

235–237 (TAE) provides a ligand contact to L-serine. ATP is bound by residues 266 to 268 (RRE) and Val282. Glu289 is an L-serine binding site. Residue 353 to 356 (EASS) participates in ATP binding. Ser389 provides a ligand contact to L-serine.

It belongs to the class-II aminoacyl-tRNA synthetase family. Type-1 seryl-tRNA synthetase subfamily. Homodimer. The tRNA molecule binds across the dimer.

Its subcellular location is the cytoplasm. The catalysed reaction is tRNA(Ser) + L-serine + ATP = L-seryl-tRNA(Ser) + AMP + diphosphate + H(+). It carries out the reaction tRNA(Sec) + L-serine + ATP = L-seryl-tRNA(Sec) + AMP + diphosphate + H(+). The protein operates within aminoacyl-tRNA biosynthesis; selenocysteinyl-tRNA(Sec) biosynthesis; L-seryl-tRNA(Sec) from L-serine and tRNA(Sec): step 1/1. Its function is as follows. Catalyzes the attachment of serine to tRNA(Ser). Is also able to aminoacylate tRNA(Sec) with serine, to form the misacylated tRNA L-seryl-tRNA(Sec), which will be further converted into selenocysteinyl-tRNA(Sec). This chain is Serine--tRNA ligase, found in Prosthecochloris aestuarii (strain DSM 271 / SK 413).